Here is a 59-residue protein sequence, read N- to C-terminus: Salivary thrombin inhibitor XC-43 (59 aa).

The N-terminal stretch at 1–23 is a signal peptide; it reads MNLQFLFIFIAFCVMLFAQIVTA.

Interacts with human F2 (thrombin). Salivary gland (at protein level).

The protein resides in the secreted. In terms of biological role, anticoagulant protein that acts as a competitive inhibitor of host thrombin. Inhibits thrombin-mediated host platelet aggregation. The protein is Salivary thrombin inhibitor XC-43 of Xenopsylla cheopis (Oriental rat flea).